The following is a 99-amino-acid chain: Acylphosphatase-1 (99 aa).

A2 is subject to N-acetylalanine. One can recognise an Acylphosphatase-like domain in the interval S9–K99. Residues R24 and N42 contribute to the active site.

It belongs to the acylphosphatase family. As to expression, organ-common type isozyme is found in many different tissues.

The enzyme catalyses an acyl phosphate + H2O = a carboxylate + phosphate + H(+). This Gallus gallus (Chicken) protein is Acylphosphatase-1 (ACYP1).